The sequence spans 668 residues: Nuclear pore complex protein Nup75 (668 aa).

It belongs to the nucleoporin Nup85 family. As to quaternary structure, component of the nuclear pore complex (NPC). Component of the NPC Nup107-160 subcomplex.

It is found in the nucleus. It localises to the nuclear pore complex. The protein localises to the nucleus membrane. Component of the nuclear pore complex (NPC) that seems to be required for NPC assembly and maintenance. Required for nuclear import of phosphorylated Mad via importin msk. Has no role in classical nuclear localization signal (cNLS)-dependent nuclear import via importin-beta. Facilitates the interaction between Nup93 and sec13 with msk. The polypeptide is Nuclear pore complex protein Nup75 (Drosophila melanogaster (Fruit fly)).